Consider the following 77-residue polypeptide: MKDNIHPDYHEINVVMTDGTEYKTRSTMGKAGDTLRLDIDPKSHPAWTGVHRMVDTAGQLAKFKKRFEGFGIKSDNS.

Belongs to the bacterial ribosomal protein bL31 family. Type A subfamily. In terms of assembly, part of the 50S ribosomal subunit.

In terms of biological role, binds the 23S rRNA. This chain is Large ribosomal subunit protein bL31, found in Paramagnetospirillum magneticum (strain ATCC 700264 / AMB-1) (Magnetospirillum magneticum).